Here is a 414-residue protein sequence, read N- to C-terminus: Probable tRNA pseudouridine synthase D (414 aa).

D90 serves as the catalytic Nucleophile. In terms of domain architecture, TRUD spans G162–A382.

Belongs to the pseudouridine synthase TruD family.

The enzyme catalyses uridine(13) in tRNA = pseudouridine(13) in tRNA. In terms of biological role, could be responsible for synthesis of pseudouridine from uracil-13 in transfer RNAs. The chain is Probable tRNA pseudouridine synthase D from Picrophilus torridus (strain ATCC 700027 / DSM 9790 / JCM 10055 / NBRC 100828 / KAW 2/3).